A 743-amino-acid polypeptide reads, in one-letter code: MSDSTAPSAHRPRGSEDFGVFDDAKTYYASDERHTGRFANRTRTYSQSSLIKQIERLNLPEPFRRGSHDESNLEQGRRFLIQVDATLESLKAQEDTDGNMQITIEDSGPKVLPLRTAASAGYHRFEVRGTYMLSNLLQELTLAKEYGRKQIILDEARLNENPVNRLSRLIKDHFWDGLTRRIDASSIEIAARDPKDWTDDPRPRIYIPSKCTAQFEYYKQVALDRPEIRLDVQLLPEVITPEIIRDMNEKPGLLAVAVEEVEEQDPVKGTIKTLRGLPFVVPGGRFNELYGWDSYMESLGLLVNDRVDLAKAMVLNFCFCIEHYGKILNATRSYYLGRSQPPFLTDMALRVYEKIKHEPDALEFLRRSILAAIKEYHSVWTGQARLDPTTGLSRYCPEGLGVPPETEPSHFVHILQPYIKKHGMEFDEFVRAYNHGEIKEPELDNYFMHDRAVRESGHDTSYRFEGVCANLATIDLNSLLFKYETDISRTIRSLFDDKLVMPEEFCQGTPYKPGDILTSALWDRKAKRRKLTMDKLMWNEEEGMFFDYDFVNKKRCTYETATTLWSLWAGLASPKQAADIVKKGLPKFEEFGGLLAGTESSRGEIGLERPNRQWDYPYGWAPQQMLAWTGLLRYSFNEEAERLAYKWLFMITKAFVDFNGVVVEKYDVTRPIDPHRVDAEYGNQGLNFKGVAKEGFGWVNASYVYGLQIVNAHMRRALGTLTPYPTFIKAIEQLNEKALADLE.

Residues Asp-95, Asp-97, Asn-99, Gln-101, and Asp-106 each coordinate Ca(2+). Residues Arg-285, 292 to 293, Asn-329, 338 to 340, Glu-405, Arg-454, and Gly-457 each bind substrate; these read WD and RSQ. Active-site proton donor/acceptor residues include Asp-459 and Glu-664.

This sequence belongs to the glycosyl hydrolase 37 family. It depends on Ca(2+) as a cofactor.

It localises to the cytoplasm. It catalyses the reaction alpha,alpha-trehalose + H2O = alpha-D-glucose + beta-D-glucose. It participates in carbohydrate degradation. Functionally, hydrolyzes intracellular trehalose to glucose. This is Cytosolic neutral trehalase from Beauveria bassiana (strain ARSEF 2860) (White muscardine disease fungus).